The sequence spans 978 residues: uncharacterized protein (978 aa).

A signal peptide spans M1 to A27. Residues G713 to W978 form the Autotransporter domain.

This is an uncharacterized protein from Salmonella typhimurium (strain LT2 / SGSC1412 / ATCC 700720).